The sequence spans 565 residues: Alkaline nuclease (565 aa).

This sequence belongs to the herpesviridae alkaline nuclease family. In terms of assembly, interacts with major DNA-binding protein; this interaction increases the nuclease processivity of the alkaline exonuclease.

It is found in the host nucleus. It localises to the host cytoplasm. Functionally, plays a role in processing non linear or branched viral DNA intermediates in order to promote the production of mature packaged unit-length linear progeny viral DNA molecules. Exhibits endonuclease and exonuclease activities and accepts both double-stranded and single-stranded DNA as substrate. Exonuclease digestion of DNA is in the 5'-&gt; 3' direction and the products are 5'-monophosphate nucleosides. Additionally, forms a recombinase with the major DNA-binding protein, which displays strand exchange activity. The sequence is that of Alkaline nuclease from Equus caballus (Horse).